Reading from the N-terminus, the 313-residue chain is E3 ubiquitin-protein ligase RNF126 (313 aa).

Alanine 2 is subject to N-acetylalanine. Serine 5 is subject to Phosphoserine. The interval serine 5 to alanine 100 is required for interaction with BAG6. Zn(2+)-binding residues include cysteine 13, cysteine 16, cysteine 29, and cysteine 32. A C4-type zinc finger spans residues cysteine 13–cysteine 32. Disordered stretches follow at residues glutamate 42 to glutamine 63 and threonine 95 to arginine 128. Positions threonine 47–glutamine 63 are enriched in polar residues. Over residues aspartate 103–histidine 116 the composition is skewed to basic and acidic residues. Basic residues predominate over residues glutamine 117–arginine 128. A sufficient for interaction with AICDA region spans residues threonine 202–asparagine 306. The RING-type zinc-finger motif lies at cysteine 231–arginine 272. Residues asparagine 279–serine 313 form a disordered region. Positions serine 293–serine 313 are enriched in low complexity.

As to quaternary structure, interacts with CCDC50, EGFR, FLT3 and SCAMP3. Interacts with BAG6 (via ubiquitin-like domain); required for BAG6-dependent ubiquitination of proteins mislocalized to the cytosol. Interacts with CDKN1A. Interacts with AICDA. In terms of processing, ubiquitinated. May undergo autoubiquitination. In terms of tissue distribution, detected in B-cells (at protein level).

The protein localises to the cytoplasm. It localises to the nucleus. The catalysed reaction is S-ubiquitinyl-[E2 ubiquitin-conjugating enzyme]-L-cysteine + [acceptor protein]-L-lysine = [E2 ubiquitin-conjugating enzyme]-L-cysteine + N(6)-ubiquitinyl-[acceptor protein]-L-lysine.. It participates in protein modification; protein ubiquitination. Functionally, E3 ubiquitin-protein ligase that mediates ubiquitination oF target proteins. Depending on the associated E2 ligase, mediates 'Lys-27'-, 'Lys-29'-, 'Lys-48'- and/or 'Lys-63'-linked polyubiquitination of substrates. Part of a BAG6-dependent quality control process ensuring that proteins of the secretory pathway that are mislocalized to the cytosol are degraded by the proteasome. Probably acts by providing the ubiquitin ligase activity associated with the BAG6 complex and be responsible for ubiquitination of the hydrophobic mislocalized proteins and their targeting to the proteasome. May also play a role in the endosomal recycling of IGF2R, the cation-independent mannose-6-phosphate receptor. May play a role in the endosomal sorting and degradation of several membrane receptors including EGFR, FLT3, MET and CXCR4, by mediating their ubiquitination. By ubiquitinating CDKN1A/p21 and targeting it for degradation, may also promote cell proliferation. May monoubiquitinate AICDA. Acts as a regulator of DNA repair by mediating 'Lys-27'- and 'Lys-29'-linked polyubiquitination of MRE11, thereby promoting the exonuclease activity of MRE11. This chain is E3 ubiquitin-protein ligase RNF126, found in Mus musculus (Mouse).